We begin with the raw amino-acid sequence, 346 residues long: DNA-directed RNA polymerase subunit alpha (346 aa).

The segment at 1–242 is alpha N-terminal domain (alpha-NTD); the sequence is MLIQDGDKLI…DQLSVFINFD (242 aa). The tract at residues 258–346 is alpha C-terminal domain (alpha-CTD); sequence LNPNLFKSID…WLKRKEKNEA (89 aa).

It belongs to the RNA polymerase alpha chain family. As to quaternary structure, homodimer. The RNAP catalytic core consists of 2 alpha, 1 beta, 1 beta' and 1 omega subunit. When a sigma factor is associated with the core the holoenzyme is formed, which can initiate transcription.

The enzyme catalyses RNA(n) + a ribonucleoside 5'-triphosphate = RNA(n+1) + diphosphate. Functionally, DNA-dependent RNA polymerase catalyzes the transcription of DNA into RNA using the four ribonucleoside triphosphates as substrates. This is DNA-directed RNA polymerase subunit alpha from Maridesulfovibrio salexigens (strain ATCC 14822 / DSM 2638 / NCIMB 8403 / VKM B-1763) (Desulfovibrio salexigens).